The sequence spans 1357 residues: DNA-directed RNA polymerase subunit beta (1357 aa).

The protein belongs to the RNA polymerase beta chain family. As to quaternary structure, the RNAP catalytic core consists of 2 alpha, 1 beta, 1 beta' and 1 omega subunit. When a sigma factor is associated with the core the holoenzyme is formed, which can initiate transcription.

It carries out the reaction RNA(n) + a ribonucleoside 5'-triphosphate = RNA(n+1) + diphosphate. Its function is as follows. DNA-dependent RNA polymerase catalyzes the transcription of DNA into RNA using the four ribonucleoside triphosphates as substrates. The protein is DNA-directed RNA polymerase subunit beta of Pseudomonas fluorescens (strain SBW25).